The sequence spans 911 residues: Nitrate reductase [NADH] (911 aa).

Residues 1–10 (MAASVENRQY) show a composition bias toward polar residues. A disordered region spans residues 1–71 (MAASVENRQY…SEDEDDDDEK (71 aa)). The span at 61-71 (SSEDEDDDDEK) shows a compositional bias: acidic residues. Cys188 is a Mo-molybdopterin binding site. One can recognise a Cytochrome b5 heme-binding domain in the interval 536-611 (SKMYSMSEVR…LEDFRIGELI (76 aa)). Residues His571 and His594 each coordinate heme. Positions 654–766 (REKIPCKLVD…KGPLGHIEYQ (113 aa)) constitute an FAD-binding FR-type domain. Residues 706–709 (RAYT), 723–727 (VVKIY), Phe728, Phe735, 740–742 (QMS), and Thr793 each bind FAD.

The protein belongs to the nitrate reductase family. Homodimer. FAD serves as cofactor. It depends on heme as a cofactor. Requires Mo-molybdopterin as cofactor.

It carries out the reaction nitrite + NAD(+) + H2O = nitrate + NADH + H(+). In terms of biological role, nitrate reductase is a key enzyme involved in the first step of nitrate assimilation in plants, fungi and bacteria. This chain is Nitrate reductase [NADH] (NIA), found in Solanum lycopersicum (Tomato).